Consider the following 539-residue polypeptide: uncharacterized protein (539 aa).

6–20 (LIIGGGGAAARAAIE) serves as a coordination point for FAD. Catalysis depends on residues His227 and Arg243.

This sequence belongs to the FAD-dependent oxidoreductase 2 family. FRD/SDH subfamily. Requires FAD as cofactor.

This is an uncharacterized protein from Methanocaldococcus jannaschii (strain ATCC 43067 / DSM 2661 / JAL-1 / JCM 10045 / NBRC 100440) (Methanococcus jannaschii).